Reading from the N-terminus, the 99-residue chain is Putative pterin-4-alpha-carbinolamine dehydratase (99 aa).

This sequence belongs to the pterin-4-alpha-carbinolamine dehydratase family.

It carries out the reaction (4aS,6R)-4a-hydroxy-L-erythro-5,6,7,8-tetrahydrobiopterin = (6R)-L-erythro-6,7-dihydrobiopterin + H2O. This is Putative pterin-4-alpha-carbinolamine dehydratase from Saccharolobus islandicus (strain M.16.27) (Sulfolobus islandicus).